The chain runs to 186 residues: Tegument protein UL55 (186 aa).

Belongs to the alphaherpesvirinae HHV-1 UL55 family.

The protein localises to the virion tegument. It localises to the host nucleus matrix. This Human herpesvirus 2 (strain HG52) (HHV-2) protein is Tegument protein UL55.